Here is a 320-residue protein sequence, read N- to C-terminus: Porphobilinogen deaminase (320 aa).

Cysteine 248 carries the S-(dipyrrolylmethanemethyl)cysteine modification.

The protein belongs to the HMBS family. As to quaternary structure, monomer. The cofactor is dipyrromethane.

The enzyme catalyses 4 porphobilinogen + H2O = hydroxymethylbilane + 4 NH4(+). It functions in the pathway porphyrin-containing compound metabolism; protoporphyrin-IX biosynthesis; coproporphyrinogen-III from 5-aminolevulinate: step 2/4. The protein operates within porphyrin-containing compound metabolism; chlorophyll biosynthesis. In terms of biological role, tetrapolymerization of the monopyrrole PBG into the hydroxymethylbilane pre-uroporphyrinogen in several discrete steps. The protein is Porphobilinogen deaminase of Synechococcus elongatus (strain ATCC 33912 / PCC 7942 / FACHB-805) (Anacystis nidulans R2).